Reading from the N-terminus, the 551-residue chain is Glucans biosynthesis protein D (551 aa).

The tat-type signal signal peptide spans 1–32 (MDRRRFIKGSMAMAAVCGTSGIASLFSQAAFA).

Belongs to the OpgD/OpgG family. Predicted to be exported by the Tat system. The position of the signal peptide cleavage has not been experimentally proven.

It localises to the periplasm. It participates in glycan metabolism; osmoregulated periplasmic glucan (OPG) biosynthesis. Functionally, probably involved in the control of the structural glucose backbone of osmoregulated periplasmic glucans (OPGs). This is Glucans biosynthesis protein D from Escherichia coli O139:H28 (strain E24377A / ETEC).